Reading from the N-terminus, the 1216-residue chain is Regulator of telomere elongation helicase 1 (1216 aa).

In terms of domain architecture, Helicase ATP-binding spans 7–295; the sequence is KGVTVDFPFQ…TKVAQQAELH (289 aa). 42–49 is a binding site for ATP; the sequence is SPTGTGKT. [4Fe-4S] cluster contacts are provided by C144, C162, C171, and C206. The Nuclear localization signal signature appears at 150 to 166; it reads KKQESNHMQVHLCRRKV. Residues 249–252 carry the DEAH box motif; it reads DEAH. Residues 874–880 carry the Nuclear localization signal motif; it reads QRGRRRK. Disordered stretches follow at residues 978 to 1018 and 1140 to 1172; these read GCSS…ATRQ and GPGT…RKTQ. Positions 1172–1179 match the PIP-box motif; it reads QSKISSFL.

Belongs to the helicase family. RAD3/XPD subfamily. As to quaternary structure, interacts with TERF1. Interacts (via PIP-box) with PCNA; the interaction is direct and essential for suppressing telomere fragility. Interacts with MMS19; the interaction mediates the association of RTEL1 with the cytosolic iron-sulfur protein assembly (CIA) complex. Highly expressed in adult testis, liver and ovary.

Its subcellular location is the nucleus. The catalysed reaction is ATP + H2O = ADP + phosphate + H(+). In terms of biological role, a probable ATP-dependent DNA helicase implicated in telomere-length regulation, DNA repair and the maintenance of genomic stability. Acts as an anti-recombinase to counteract toxic recombination and limit crossover during meiosis. Regulates meiotic recombination and crossover homeostasis by physically dissociating strand invasion events and thereby promotes noncrossover repair by meiotic synthesis dependent strand annealing (SDSA) as well as disassembly of D loop recombination intermediates. Also disassembles T loops and prevents telomere fragility by counteracting telomeric G4-DNA structures, which together ensure the dynamics and stability of the telomere. The chain is Regulator of telomere elongation helicase 1 from Bos taurus (Bovine).